A 449-amino-acid polypeptide reads, in one-letter code: Clusterin (449 aa).

A signal peptide spans 1-22 (MMKTLLLFVGLLLTWESGQVLG). The Nuclear localization signal motif lies at 78 to 81 (KKKK). Asn86 carries an N-linked (GlcNAc...) (complex) asparagine glycan. Cystine bridges form between Cys102–Cys313, Cys113–Cys305, Cys116–Cys302, Cys121–Cys295, and Cys129–Cys285. N-linked (GlcNAc...) asparagine glycosylation is present at Asn103. At Ser133 the chain carries Phosphoserine. N-linked (GlcNAc...) asparagine glycans are attached at residues Asn145, Asn291, and Asn354. Asn374 carries N-linked (GlcNAc...) (complex) asparagine glycosylation. Ser396 is subject to Phosphoserine. Residues 443–447 (RKKHR) carry the Nuclear localization signal motif.

This sequence belongs to the clusterin family. As to quaternary structure, antiparallel disulfide-linked heterodimer of an alpha chain and a beta chain. Self-associates and forms higher oligomers. Interacts with a broad range of misfolded proteins, including APP, APOC2 and LYZ. Slightly acidic pH promotes interaction with misfolded proteins. Forms high-molecular weight oligomers upon interaction with misfolded proteins. Interacts with APOA1, LRP2, CLUAP1 and PON1. Interacts with the complement membrane attack complex. Interacts (via alpha chain) with XRCC6. Interacts with SYVN1, COMMD1, BTRC, CUL1 and with ubiquitin and SCF (SKP1-CUL1-F-box protein) E3 ubiquitin-protein ligase complexes. Interacts (via alpha chain) with BAX in stressed cells, where BAX undergoes a conformation change leading to association with the mitochondrial membrane. Does not interact with BAX in unstressed cells. Found in a complex with LTF, CLU, EPPIN and SEMG1. Interacts (immaturely glycosylated pre-secreted form) with HSPA5; this interaction promotes CLU stability and facilitates stress-induced CLU retrotranslocation from the secretory pathway to the mitochondria, thereby reducing stress-induced apoptosis by stabilizing mitochondrial membrane integrity. Interacts (isoform 4) with BCL2L1; this interaction releases and activates BAX and promotes cell death. Interacts with TGFBR2 and ACVR1. Interacts (secreted form) with STMN3; this interaction may act as an important modulator during neuronal differentiation. Interacts with VLDLR and LRP8. Proteolytically cleaved on its way through the secretory system, probably within the Golgi lumen. Proteolytic cleavage is not necessary for its chaperone activity. All non-secreted forms are not proteolytically cleaved. Chaperone activity of uncleaved forms is dependent on a non-reducing environment. Post-translationally, polyubiquitinated, leading to proteasomal degradation. Under cellular stress, the intracellular level of cleaved form is reduced due to proteasomal degradation. In terms of processing, extensively glycosylated with sulfated N-linked carbohydrates. About 30% of the protein mass is comprised of complex N-linked carbohydrate. Endoplasmic reticulum (ER) stress induces changes in glycosylation status and increases level of hypoglycosylated forms. Core carbohydrates are essential for chaperone activity. Non-secreted forms are hypoglycosylated or unglycosylated. Detected in blood plasma, cerebrospinal fluid, milk, seminal plasma and colon mucosa. Detected in the germinal center of colon lymphoid nodules and in colon parasympathetic ganglia of the Auerbach plexus (at protein level). Ubiquitous. Detected in brain, testis, ovary, liver and pancreas, and at lower levels in kidney, heart, spleen and lung.

The protein localises to the secreted. The protein resides in the cytoplasm. It localises to the nucleus. Its subcellular location is the mitochondrion membrane. It is found in the cytosol. The protein localises to the microsome. The protein resides in the endoplasmic reticulum. It localises to the mitochondrion. Its subcellular location is the perinuclear region. It is found in the cytoplasmic vesicle. The protein localises to the secretory vesicle. The protein resides in the chromaffin granule. Functions as extracellular chaperone that prevents aggregation of non native proteins. Prevents stress-induced aggregation of blood plasma proteins. Inhibits formation of amyloid fibrils by APP, APOC2, B2M, CALCA, CSN3, SNCA and aggregation-prone LYZ variants (in vitro). Does not require ATP. Maintains partially unfolded proteins in a state appropriate for subsequent refolding by other chaperones, such as HSPA8/HSC70. Does not refold proteins by itself. Binding to cell surface receptors triggers internalization of the chaperone-client complex and subsequent lysosomal or proteasomal degradation. Protects cells against apoptosis and against cytolysis by complement: inhibits assembly of the complement membrane attack complex (MAC) by preventing polymerization of C9 pore component of the MAC complex. Intracellular forms interact with ubiquitin and SCF (SKP1-CUL1-F-box protein) E3 ubiquitin-protein ligase complexes and promote the ubiquitination and subsequent proteasomal degradation of target proteins. Promotes proteasomal degradation of COMMD1 and IKBKB. Modulates NF-kappa-B transcriptional activity. A mitochondrial form suppresses BAX-dependent release of cytochrome c into the cytoplasm and inhibit apoptosis. Plays a role in the regulation of cell proliferation. An intracellular form suppresses stress-induced apoptosis by stabilizing mitochondrial membrane integrity through interaction with HSPA5. Secreted form does not affect caspase or BAX-mediated intrinsic apoptosis and TNF-induced NF-kappa-B-activity. Secreted form act as an important modulator during neuronal differentiation through interaction with STMN3. Plays a role in the clearance of immune complexes that arise during cell injury. Its function is as follows. Does not affect caspase or BAX-mediated intrinsic apoptosis and TNF-induced NF-kappa-B-activity. Functionally, does not affect caspase or BAX-mediated intrinsic apoptosis and TNF-induced NF-kappa-B-activity. Promotes cell death through interaction with BCL2L1 that releases and activates BAX. The polypeptide is Clusterin (Homo sapiens (Human)).